Reading from the N-terminus, the 122-residue chain is Large ribosomal subunit protein uL14 (122 aa).

Belongs to the universal ribosomal protein uL14 family. As to quaternary structure, part of the 50S ribosomal subunit. Forms a cluster with proteins L3 and L19. In the 70S ribosome, L14 and L19 interact and together make contacts with the 16S rRNA in bridges B5 and B8.

In terms of biological role, binds to 23S rRNA. Forms part of two intersubunit bridges in the 70S ribosome. The polypeptide is Large ribosomal subunit protein uL14 (Rhizobium etli (strain CIAT 652)).